The chain runs to 427 residues: UBX domain-containing protein 2 (427 aa).

2 disordered regions span residues 115–143 (FDQSPSQIPFPSSNTEDSSEESDSSSRAS) and 273–331 (ETSG…GVAD). Low complexity predominate over residues 311–326 (STTESQGESSSQQAES). The UBX domain occupies 349 to 425 (PGPNVTRIQI…GIQNTALQFE (77 aa)). S371 bears the Phosphoserine mark.

As to quaternary structure, interacts with cdc48.

Involved in CDC48-dependent protein degradation through the ubiquitin/proteasome pathway. This is UBX domain-containing protein 2 (ubx2) from Schizosaccharomyces pombe (strain 972 / ATCC 24843) (Fission yeast).